Reading from the N-terminus, the 415-residue chain is Serine hydroxymethyltransferase (415 aa).

Residues Leu121 and 125–127 (GHL) each bind (6S)-5,6,7,8-tetrahydrofolate. The residue at position 229 (Lys229) is an N6-(pyridoxal phosphate)lysine. A (6S)-5,6,7,8-tetrahydrofolate-binding site is contributed by 352–354 (TPF).

The protein belongs to the SHMT family. As to quaternary structure, homodimer. The cofactor is pyridoxal 5'-phosphate.

It is found in the cytoplasm. It carries out the reaction (6R)-5,10-methylene-5,6,7,8-tetrahydrofolate + glycine + H2O = (6S)-5,6,7,8-tetrahydrofolate + L-serine. It participates in one-carbon metabolism; tetrahydrofolate interconversion. It functions in the pathway amino-acid biosynthesis; glycine biosynthesis; glycine from L-serine: step 1/1. In terms of biological role, catalyzes the reversible interconversion of serine and glycine with tetrahydrofolate (THF) serving as the one-carbon carrier. This reaction serves as the major source of one-carbon groups required for the biosynthesis of purines, thymidylate, methionine, and other important biomolecules. Also exhibits THF-independent aldolase activity toward beta-hydroxyamino acids, producing glycine and aldehydes, via a retro-aldol mechanism. This chain is Serine hydroxymethyltransferase, found in Chromobacterium violaceum (strain ATCC 12472 / DSM 30191 / JCM 1249 / CCUG 213 / NBRC 12614 / NCIMB 9131 / NCTC 9757 / MK).